Reading from the N-terminus, the 533-residue chain is Apolipoprotein N-acyltransferase (533 aa).

The next 5 membrane-spanning stretches (helical) occupy residues 17–37 (FFLP…WPAV), 72–92 (LLFC…GGIL), 116–136 (GFRS…WAYM), 165–185 (GVWG…LLFM), and 190–210 (FQVK…PLLY). One can recognise a CN hydrolase domain in the interval 232–499 (VQPDIDPHEK…QSVLTADVPL (268 aa)). Glu-274 acts as the Proton acceptor in catalysis. Lys-352 is an active-site residue. Cys-410 acts as the Nucleophile in catalysis. The chain crosses the membrane as a helical span at residues 510–530 (PDLVPHVCLGIAGVLALVAAV).

This sequence belongs to the CN hydrolase family. Apolipoprotein N-acyltransferase subfamily.

The protein localises to the cell inner membrane. It carries out the reaction N-terminal S-1,2-diacyl-sn-glyceryl-L-cysteinyl-[lipoprotein] + a glycerophospholipid = N-acyl-S-1,2-diacyl-sn-glyceryl-L-cysteinyl-[lipoprotein] + a 2-acyl-sn-glycero-3-phospholipid + H(+). Its pathway is protein modification; lipoprotein biosynthesis (N-acyl transfer). In terms of biological role, catalyzes the phospholipid dependent N-acylation of the N-terminal cysteine of apolipoprotein, the last step in lipoprotein maturation. The protein is Apolipoprotein N-acyltransferase of Chlorobaculum tepidum (strain ATCC 49652 / DSM 12025 / NBRC 103806 / TLS) (Chlorobium tepidum).